Reading from the N-terminus, the 372-residue chain is tRNA-specific 2-thiouridylase MnmA (372 aa).

ATP-binding positions include G16–S23 and M42. The interval N102 to D104 is interaction with target base in tRNA. Catalysis depends on C107, which acts as the Nucleophile. A disulfide bridge links C107 with C205. G132 lines the ATP pocket. The interaction with tRNA stretch occupies residues K155–Q157. The active-site Cysteine persulfide intermediate is the C205. Residues R317 to Y318 form an interaction with tRNA region.

The protein belongs to the MnmA/TRMU family.

The protein localises to the cytoplasm. The catalysed reaction is S-sulfanyl-L-cysteinyl-[protein] + uridine(34) in tRNA + AH2 + ATP = 2-thiouridine(34) in tRNA + L-cysteinyl-[protein] + A + AMP + diphosphate + H(+). In terms of biological role, catalyzes the 2-thiolation of uridine at the wobble position (U34) of tRNA, leading to the formation of s(2)U34. The chain is tRNA-specific 2-thiouridylase MnmA from Shewanella frigidimarina (strain NCIMB 400).